The following is a 168-amino-acid chain: Nicotinamide-nucleotide adenylyltransferase (168 aa).

This sequence belongs to the archaeal NMN adenylyltransferase family.

It localises to the cytoplasm. It catalyses the reaction beta-nicotinamide D-ribonucleotide + ATP + H(+) = diphosphate + NAD(+). Its pathway is cofactor biosynthesis; NAD(+) biosynthesis; NAD(+) from nicotinamide D-ribonucleotide: step 1/1. The sequence is that of Nicotinamide-nucleotide adenylyltransferase from Methanosphaerula palustris (strain ATCC BAA-1556 / DSM 19958 / E1-9c).